Here is a 441-residue protein sequence, read N- to C-terminus: Ribulose bisphosphate carboxylase large chain (441 aa).

K5 carries the N6,N6,N6-trimethyllysine modification. Substrate is bound by residues N114 and T164. The active-site Proton acceptor is K166. K168 provides a ligand contact to substrate. 3 residues coordinate Mg(2+): K192, D194, and E195. Residue K192 is modified to N6-carboxylysine. Residue H285 is the Proton acceptor of the active site. Substrate-binding residues include R286, H318, and S370.

This sequence belongs to the RuBisCO large chain family. Type I subfamily. As to quaternary structure, heterohexadecamer of 8 large chains and 8 small chains; disulfide-linked. The disulfide link is formed within the large subunit homodimers. Requires Mg(2+) as cofactor. Post-translationally, the disulfide bond which can form in the large chain dimeric partners within the hexadecamer appears to be associated with oxidative stress and protein turnover.

It localises to the plastid. The protein localises to the chloroplast. It catalyses the reaction 2 (2R)-3-phosphoglycerate + 2 H(+) = D-ribulose 1,5-bisphosphate + CO2 + H2O. The catalysed reaction is D-ribulose 1,5-bisphosphate + O2 = 2-phosphoglycolate + (2R)-3-phosphoglycerate + 2 H(+). Its function is as follows. RuBisCO catalyzes two reactions: the carboxylation of D-ribulose 1,5-bisphosphate, the primary event in carbon dioxide fixation, as well as the oxidative fragmentation of the pentose substrate in the photorespiration process. Both reactions occur simultaneously and in competition at the same active site. The sequence is that of Ribulose bisphosphate carboxylase large chain from Pellaea andromedifolia (Coffee fern).